The sequence spans 220 residues: Deoxyribose-phosphate aldolase (220 aa).

The active-site Proton donor/acceptor is the aspartate 89. Residue lysine 151 is the Schiff-base intermediate with acetaldehyde of the active site. The active-site Proton donor/acceptor is the lysine 180.

This sequence belongs to the DeoC/FbaB aldolase family. DeoC type 1 subfamily.

The protein localises to the cytoplasm. It catalyses the reaction 2-deoxy-D-ribose 5-phosphate = D-glyceraldehyde 3-phosphate + acetaldehyde. It functions in the pathway carbohydrate degradation; 2-deoxy-D-ribose 1-phosphate degradation; D-glyceraldehyde 3-phosphate and acetaldehyde from 2-deoxy-alpha-D-ribose 1-phosphate: step 2/2. In terms of biological role, catalyzes a reversible aldol reaction between acetaldehyde and D-glyceraldehyde 3-phosphate to generate 2-deoxy-D-ribose 5-phosphate. The sequence is that of Deoxyribose-phosphate aldolase from Streptococcus sanguinis (strain SK36).